Here is a 398-residue protein sequence, read N- to C-terminus: MQKRLTLLGSTGSIGDSTLDVVARHPERFSVYALTAHRNGDKLVEQCLRFAPEVAVVGDAATAAHVDAKLRAAGSKTTVLHGPQALVDVSKSDGCDTVVAAIVGAAGMAPSLAAARAGKRILLANKEALVMSGAIFMDAVRDHGAILLPVDSEHNAIFQCMPRDAAEHGGISKIILTASGGPFRTREPATLVDVTPDEACKHPNWVMGRKISVDSATMMNKGLEVIEAHWIFGLPGDRIDVLIHPQSVIHSLVSYRDGSVLAQLGNPDMRTPIAYALAFPERVDAGVDQLDLAQIAQLSFEKPDYARFPCLALALKALEEGGIASAALNAANEVAVEAFLERRIGFMAIAATVDAVLNTLPNRTPDGLEDVLAADAEARRLAAEIIAKAPAPRVERTV.

Residues threonine 11, glycine 12, serine 13, isoleucine 14, arginine 38, asparagine 39, and asparagine 125 each contribute to the NADPH site. Lysine 126 is a 1-deoxy-D-xylulose 5-phosphate binding site. Glutamate 127 contributes to the NADPH binding site. Position 151 (aspartate 151) interacts with Mn(2+). Serine 152, glutamate 153, serine 179, and histidine 202 together coordinate 1-deoxy-D-xylulose 5-phosphate. Glutamate 153 contributes to the Mn(2+) binding site. Glycine 208 provides a ligand contact to NADPH. Residues serine 215, asparagine 220, lysine 221, and glutamate 224 each contribute to the 1-deoxy-D-xylulose 5-phosphate site. Glutamate 224 lines the Mn(2+) pocket.

It belongs to the DXR family. Requires Mg(2+) as cofactor. The cofactor is Mn(2+).

It carries out the reaction 2-C-methyl-D-erythritol 4-phosphate + NADP(+) = 1-deoxy-D-xylulose 5-phosphate + NADPH + H(+). The protein operates within isoprenoid biosynthesis; isopentenyl diphosphate biosynthesis via DXP pathway; isopentenyl diphosphate from 1-deoxy-D-xylulose 5-phosphate: step 1/6. In terms of biological role, catalyzes the NADPH-dependent rearrangement and reduction of 1-deoxy-D-xylulose-5-phosphate (DXP) to 2-C-methyl-D-erythritol 4-phosphate (MEP). This Burkholderia lata (strain ATCC 17760 / DSM 23089 / LMG 22485 / NCIMB 9086 / R18194 / 383) protein is 1-deoxy-D-xylulose 5-phosphate reductoisomerase.